A 1736-amino-acid polypeptide reads, in one-letter code: Collagen alpha-2(XI) chain (1736 aa).

A signal peptide spans 1-27; that stretch reads MERCSRCHHLLLLVLLLLWLSAAPAWA. A Laminin G-like domain is found at 57–228; sequence DVAYRVSRPA…ESCDQKELEC (172 aa). A nonhelical region region spans residues 215-486; it reads QAAYESCDQK…ILQQARVALR (272 aa). 2 disordered regions span residues 229 to 465 and 485 to 1539; these read EGGW…DKGP and LRGP…SPGG. Polar residues predominate over residues 258–270; it reads PQNQEPQAQSTES. Residues 363 to 376 are compositionally biased toward low complexity; sequence ALSAETARSEAAAR. 3 consecutive Collagen-like domains span residues 399 to 447, 487 to 545, and 546 to 587; these read GPPG…GPPG, GPPG…ADGA, and RGMP…PPGE. Positions 400 to 413 are enriched in pro residues; that stretch reads PPGPEGPAGFPGPP. Residues 487-1500 form a triple-helical region region; the sequence is GPPGPMGYTG…PGHPGPPGEV (1014 aa). Positions 515–533 are enriched in low complexity; the sequence is DLGPQGPRGPQGLMGPPGK. Residues 615-624 are compositionally biased toward pro residues; sequence KGPPGIPGPP. Residues 650–663 show a composition bias toward low complexity; it reads QQGTPGTQGLPGPQ. Residues 765–774 are compositionally biased toward basic and acidic residues; it reads RGEDGPEGPK. Over residues 842-861 the composition is skewed to low complexity; that stretch reads PTGPRGQRGPRGATGKSGAK. A compositionally biased stretch (gly residues) spans 994–1003; the sequence is GTAGGPGLKG. Pro residues predominate over residues 1029–1040; the sequence is IGPPGRPGPQGP. Collagen-like domains lie at 1072–1127 and 1128–1172; these read GPAG…ADGE and PGAR…ETGD. Low complexity predominate over residues 1115 to 1133; it reads PVGQPGAAGADGEPGARGP. A compositionally biased stretch (pro residues) spans 1176–1187; it reads MGPPGPPGPRGP. A compositionally biased stretch (low complexity) spans 1217–1230; it reads ESGSPGVQGEPGVK. Composition is skewed to basic and acidic residues over residues 1232–1241 and 1287–1296; these read PRGERGEKGE and DGAKGDRGED. Low complexity-rich tracts occupy residues 1341 to 1364 and 1376 to 1386; these read PGAV…KPGP and QQGRPGATGQA. Positions 1388–1397 are enriched in pro residues; sequence PPGPVGPPGL. Low complexity predominate over residues 1413–1422; sequence PGLIGLIGPP. A Collagen-like 6 domain is found at 1444-1499; that stretch reads GETGIPGASGPIGPGGPPGLPGPAGPKGAKGATGPAGPKGEKGVQGPPGHPGPPGE. Residues 1457 to 1467 are compositionally biased toward pro residues; it reads PGGPPGLPGPA. Low complexity predominate over residues 1469 to 1481; the sequence is PKGAKGATGPAGP. A propeptide spans 1501–1736 (C-terminal propeptide); the sequence is IQPLPIQMPK…VLLGPVCFMG (236 aa). Residues 1541–1735 form the Fibrillar collagen NC1 domain; sequence EEIFGSLDSL…GVLLGPVCFM (195 aa). An intrachain disulfide couples Cys1571 to Cys1603. Asp1589, Asn1591, Gln1592, Cys1594, and Asp1597 together coordinate Ca(2+). Asn1604 and Asn1650 each carry an N-linked (GlcNAc...) asparagine glycan. 2 cysteine pairs are disulfide-bonded: Cys1612/Cys1733 and Cys1655/Cys1689.

This sequence belongs to the fibrillar collagen family. As to quaternary structure, trimers composed of three different chains: alpha 1(XI), alpha 2(XI), and alpha 3(XI). Alpha 3(XI) is a post-translational modification of alpha 1(II). Alpha 1(V) can also be found instead of alpha 3(XI)=1(II). Prolines at the third position of the tripeptide repeating unit (G-X-Y) are hydroxylated in some or all of the chains.

The protein resides in the secreted. Its subcellular location is the extracellular space. The protein localises to the extracellular matrix. Functionally, may play an important role in fibrillogenesis by controlling lateral growth of collagen II fibrils. This is Collagen alpha-2(XI) chain (COL11A2) from Bos taurus (Bovine).